The chain runs to 108 residues: Bublin coiled-coil protein (108 aa).

Disordered stretches follow at residues 1–23 (MSGP…DDDF) and 67–108 (RLEF…DEGS). Positions 25 to 73 (SEEYEAINSMLDQINSYLDDLEERNDSLNGKLHELMESNRQARLEFRAQ) form a coiled coil. The segment covering 99–108 (ENDKKIDEGS) has biased composition (basic and acidic residues).

The protein belongs to the UPF0184 (EST00098) family.

It is found in the cell junction. The protein resides in the cytoplasm. The protein localises to the cytoskeleton. Essential for intermediate filament organization in intestinal cells, interacts with intermediate filament and regulates intestinal lumen morphology. This Takifugu rubripes (Japanese pufferfish) protein is Bublin coiled-coil protein (bbln).